We begin with the raw amino-acid sequence, 129 residues long: Small ribosomal subunit protein uS11 (129 aa).

The disordered stretch occupies residues 108–129 (EDVTPIPHDGTKPKGGKRGRRV).

It belongs to the universal ribosomal protein uS11 family. As to quaternary structure, part of the 30S ribosomal subunit.

Its function is as follows. Located on the platform of the 30S subunit. This is Small ribosomal subunit protein uS11 from Methanothrix thermoacetophila (strain DSM 6194 / JCM 14653 / NBRC 101360 / PT) (Methanosaeta thermophila).